A 1028-amino-acid polypeptide reads, in one-letter code: Formin-like protein 3 (1028 aa).

Residue G2 is the site of N-myristoyl glycine attachment. One can recognise a GBD/FH3 domain in the interval 26-472; that stretch reads MPMPEPCELE…EAFQRRCHLE (447 aa). Position 95 is a phosphothreonine (T95). A Phosphoserine modification is found at S174. Positions 493 to 541 are disordered; sequence ELSEGMPPSDLDLLAPAPPPEEVLPLPPPPAPPLPPPPPPLPDKCPPAP. The segment covering 508 to 541 has biased composition (pro residues); the sequence is PAPPPEEVLPLPPPPAPPLPPPPPPLPDKCPPAP. The region spanning 561-951 is the FH2 domain; sequence IKKPIKTKFR…MREKQLAQEA (391 aa). Positions 986 to 1018 constitute a DAD domain; sequence YEGKDGTIEDIITVLKSVPFTARTAKRGSRFFC. S1014 is subject to Phosphoserine.

This sequence belongs to the formin homology family. Interacts with SRGAP2 (via SH3 domain). As to expression, expressed in endothelial cells.

It localises to the cytoplasm. The protein localises to the cell membrane. In terms of biological role, plays a role in the regulation of cell morphology and cytoskeletal organization. Required in the control of cell shape and migration. Required for developmental angiogenesis. In this process, required for microtubule reorganization and for efficient endothelial cell elongation. In quiescent endothelial cells, triggers rearrangement of the actin cytoskeleton, but does not alter microtubule alignement. The polypeptide is Formin-like protein 3 (FMNL3) (Homo sapiens (Human)).